The chain runs to 274 residues: Large ribosomal subunit protein uL2cz/uL2cy (274 aa).

Disordered stretches follow at residues 1-22 (MAIH…DSQV) and 223-274 (MNPV…RRTK).

The protein belongs to the universal ribosomal protein uL2 family. As to quaternary structure, part of the 50S ribosomal subunit.

Its subcellular location is the plastid. It localises to the chloroplast. The polypeptide is Large ribosomal subunit protein uL2cz/uL2cy (rpl2-A) (Phaseolus vulgaris (Kidney bean)).